Here is a 240-residue protein sequence, read N- to C-terminus: Glutamine transport ATP-binding protein GlnQ (240 aa).

The 235-residue stretch at 2 to 236 (IEFKNVSKHF…PPSQRLQEFL (235 aa)) folds into the ABC transporter domain. 34–41 (GPSGSGKS) is a binding site for ATP.

Belongs to the ABC transporter superfamily. As to quaternary structure, heterotetramer with 2 subunits of GlnQ and 2 subunits of GlnP.

The protein resides in the cell inner membrane. In terms of biological role, part of the binding-protein-dependent transport system for glutamine. Probably responsible for energy coupling to the transport system. In Escherichia coli (strain K12), this protein is Glutamine transport ATP-binding protein GlnQ (glnQ).